The following is a 588-amino-acid chain: MKRDRDRDREREKRAFSNGAVSSGKSKIWEEDEEEKPDAGMDELLAVLGYKVKSSDMADVAQKLEQLEMAMGTTMEDGITHLSTDTVHKNPSDMAGWVQSMLSSISTNFDMCNQENDVLVSGCGSSSSIIDFSQNHRTSTISDDDLRAIPGGAVFNSDSNKRHRSTTSSFSTTSSSMVTDSSATRPVVLVDSQETGVRLVHTLMACAEAVQQENLTLADQLVRHIGILAVSQSGAMRKVATYFAEALARRIYKIYPQDSMESSYTDVLQMHFYETCPYLKFAHFTANQAILEAFTGCNKVHVIDFSLKQGMQWPALMQALALRPGGPPAFRLTGIGPPQPDNTDALQQVGWKLAQLAETIGVEFEFRGFVANSLADLDATILDIRPSETEAVAINSVFELHRLLSRPGAIEKVLNSIKQINPKIVTLVEQEANHNAGVFIDRFNEALHYYSTMFDSLESSGSSSSASPTGILPQPPVNNQDLVMSEVYLGRQICNVVACEGSDRVERHETLNQWRVRMNSSGFDPVHLGSNAFKQASMLLALFAGGDGYRVEENDGCLMLGWHTRPLIATSAWKLLPDSGTGAGEVEL.

Residues 1-15 show a composition bias toward basic and acidic residues; that stretch reads MKRDRDRDREREKRA. The segment at 1 to 38 is disordered; it reads MKRDRDRDREREKRAFSNGAVSSGKSKIWEEDEEEKPD. The DELLA motif signature appears at 42–46; the sequence is DELLA. Positions 152 to 177 are disordered; it reads GAVFNSDSNKRHRSTTSSFSTTSSSM. Over residues 166–177 the composition is skewed to low complexity; sequence TTSSFSTTSSSM. One can recognise a GRAS domain in the interval 190 to 574; the sequence is VDSQETGVRL…RPLIATSAWK (385 aa). The segment at 197–251 is leucine repeat I (LRI); it reads VRLVHTLMACAEAVQQENLTLADQLVRHIGILAVSQSGAMRKVATYFAEALARRI. A VHIID region spans residues 269 to 334; sequence QMHFYETCPY…GGPPAFRLTG (66 aa). Positions 300-304 match the VHIID motif; the sequence is VHVID. Positions 348-380 are leucine repeat II (LRII); that stretch reads QVGWKLAQLAETIGVEFEFRGFVANSLADLDAT. The segment at 392–495 is PFYRE; sequence VAINSVFELH…EVYLGRQICN (104 aa). The LXXLL motif motif lies at 400 to 404; that stretch reads LHRLL. Residues 498 to 574 form an SAW region; that stretch reads ACEGSDRVER…RPLIATSAWK (77 aa).

Belongs to the GRAS family. DELLA subfamily. Post-translationally, phosphorylated. Ubiquitinated. Upon GA application it is ubiquitinated, leading to its subsequent degradation. Expressed in both vegetative and reproductive tissues.

It is found in the nucleus. Functionally, probable transcriptional regulator that acts as a repressor of the gibberellin (GA) signaling pathway. Probably acts by participating in large multiprotein complexes that repress transcription of GA-inducible genes. Upon GA application, it is degraded by the proteasome, allowing the GA signaling pathway. Its degradation is not essential for germination. This is DELLA protein GAI (GAI) from Solanum lycopersicum (Tomato).